A 473-amino-acid polypeptide reads, in one-letter code: Photosystem II CP43 reaction center protein (473 aa).

The propeptide occupies 1-14 (MKTLYSLRRFYPVE). The residue at position 15 (Thr-15) is an N-acetylthreonine. Residue Thr-15 is modified to Phosphothreonine. 5 consecutive transmembrane segments (helical) span residues 69 to 93 (LFEV…PHLA), 134 to 155 (LLGP…KDRN), 178 to 200 (KALY…RKIT), 255 to 275 (KPFA…LSYS), and 291 to 312 (WFNN…ASQA). Glu-367 lines the [CaMn4O5] cluster pocket. Residues 447–471 (RARAAAAGFEKGIDRDFEPVLSMTP) traverse the membrane as a helical segment.

This sequence belongs to the PsbB/PsbC family. PsbC subfamily. PSII is composed of 1 copy each of membrane proteins PsbA, PsbB, PsbC, PsbD, PsbE, PsbF, PsbH, PsbI, PsbJ, PsbK, PsbL, PsbM, PsbT, PsbX, PsbY, PsbZ, Psb30/Ycf12, at least 3 peripheral proteins of the oxygen-evolving complex and a large number of cofactors. It forms dimeric complexes. Binds multiple chlorophylls and provides some of the ligands for the Ca-4Mn-5O cluster of the oxygen-evolving complex. It may also provide a ligand for a Cl- that is required for oxygen evolution. PSII binds additional chlorophylls, carotenoids and specific lipids. is required as a cofactor.

Its subcellular location is the plastid. It is found in the chloroplast thylakoid membrane. Functionally, one of the components of the core complex of photosystem II (PSII). It binds chlorophyll and helps catalyze the primary light-induced photochemical processes of PSII. PSII is a light-driven water:plastoquinone oxidoreductase, using light energy to abstract electrons from H(2)O, generating O(2) and a proton gradient subsequently used for ATP formation. The polypeptide is Photosystem II CP43 reaction center protein (Lactuca sativa (Garden lettuce)).